The sequence spans 911 residues: Protein translocase subunit SecA (911 aa).

Residues Q87, 105–109 (GEGKT), and D512 contribute to the ATP site. The segment covering 561-571 (RHESRRIDNQL) has biased composition (basic and acidic residues). The disordered stretch occupies residues 561-583 (RHESRRIDNQLRGRSGRQGDPGS). Positions 895, 897, 906, and 907 each coordinate Zn(2+).

Belongs to the SecA family. As to quaternary structure, monomer and homodimer. Part of the essential Sec protein translocation apparatus which comprises SecA, SecYEG and auxiliary proteins SecDF-YajC and YidC. It depends on Zn(2+) as a cofactor.

The protein localises to the cell inner membrane. The protein resides in the cytoplasm. The catalysed reaction is ATP + H2O + cellular proteinSide 1 = ADP + phosphate + cellular proteinSide 2.. Its function is as follows. Part of the Sec protein translocase complex. Interacts with the SecYEG preprotein conducting channel. Has a central role in coupling the hydrolysis of ATP to the transfer of proteins into and across the cell membrane, serving both as a receptor for the preprotein-SecB complex and as an ATP-driven molecular motor driving the stepwise translocation of polypeptide chains across the membrane. In Pseudomonas putida (strain W619), this protein is Protein translocase subunit SecA.